Here is a 576-residue protein sequence, read N- to C-terminus: uncharacterized protein (576 aa).

A compositionally biased stretch (polar residues) spans D241 to A261. A disordered region spans residues D241–P270.

This is an uncharacterized protein from Bacillus subtilis (strain 168).